A 263-amino-acid chain; its full sequence is (2Z,6E)-farnesyl diphosphate synthase (263 aa).

Asp40 is an active-site residue. Asp40 is a binding site for Mg(2+). Substrate-binding positions include Gly41 to Arg44, Trp45, and Ser86 to Glu88. Asn89 serves as the catalytic Proton acceptor. Substrate is bound by residues Arg92, Arg212, and Arg218–Ser220. Glu231 is a binding site for Mg(2+).

This sequence belongs to the UPP synthase family. Z-FPP synthase subfamily. In terms of assembly, homodimer. It depends on Mg(2+) as a cofactor.

It localises to the cell membrane. It catalyses the reaction isopentenyl diphosphate + (2E)-geranyl diphosphate = (2Z,6E)-farnesyl diphosphate + diphosphate. Its function is as follows. Catalyzes the condensation of only one isopentenyl pyrophosphate (IPP) unit in the cis configuration to E-geranyl diphosphate (E-GPP) generating the 15 carbon product (2Z,6E)-farnesyl diphosphate (Z-FPP or EZ-FPP). Z-FPP is the precursor of decaprenyl diphosphate, which has a central role in the biosynthesis of the mycobacterial cell wall. This chain is (2Z,6E)-farnesyl diphosphate synthase (uppS), found in Mycolicibacterium smegmatis (strain ATCC 700084 / mc(2)155) (Mycobacterium smegmatis).